An 845-amino-acid polypeptide reads, in one-letter code: Nuclear pore complex protein Nup107 (845 aa).

2 disordered regions span residues M1–Q26 and Q677–E702. 2 stretches are compositionally biased toward polar residues: residues P7–Q26 and T685–N694.

It belongs to the nucleoporin Nup84/Nup107 family. Part of the nuclear pore complex (NPC). Expressed in spermatocytes (at protein level).

Its subcellular location is the nucleus. The protein localises to the nuclear pore complex. The protein resides in the nucleus envelope. It is found in the nucleus membrane. It localises to the cytoplasm. Its subcellular location is the cytoskeleton. The protein localises to the spindle. The protein resides in the chromosome. It is found in the nucleus matrix. In terms of biological role, plays a role in nuclear pore complex (NPC) assembly and maintenance. Required for nuclear import of Mad. Mediates the association between the nuclear pore complex and a subset of active chromatin regions adjacent to lamin-associated domains. Plays a role in double strand break repair by relocalizing the heterochromatic double strand breaks (DSBs) to the nuclear periphery as part of the homologous recombination (HR) repair process. Regulates cytokinesis during spermatocyte meiosis by maintaining type-B lamin Lam localization to the spindle envelope. Regulates female gonad development and oogenesis. The polypeptide is Nuclear pore complex protein Nup107 (Drosophila melanogaster (Fruit fly)).